Reading from the N-terminus, the 325-residue chain is Pyruvate dehydrogenase E1 component subunit beta (325 aa).

Glutamate 59 is a binding site for thiamine diphosphate.

As to quaternary structure, heterodimer of an alpha and a beta chain. Thiamine diphosphate is required as a cofactor.

The enzyme catalyses N(6)-[(R)-lipoyl]-L-lysyl-[protein] + pyruvate + H(+) = N(6)-[(R)-S(8)-acetyldihydrolipoyl]-L-lysyl-[protein] + CO2. Its function is as follows. The pyruvate dehydrogenase complex catalyzes the overall conversion of pyruvate to acetyl-CoA and CO(2). It contains multiple copies of three enzymatic components: pyruvate dehydrogenase (E1), dihydrolipoamide acetyltransferase (E2) and lipoamide dehydrogenase (E3). This is Pyruvate dehydrogenase E1 component subunit beta (pdhB) from Rickettsia bellii (strain RML369-C).